The primary structure comprises 131 residues: MSTKTVPEPEPHVLAVDDSIVDRTVISRLLRSSKYRVTTVDSGKRALEVLSLDRNVHMIITDYCMPEMTGFDLLKRVKESAELKEIPVVLMSSENSPTRIRRCLEEGAEDFLIKPVRPSDVSRLCNRVIMK.

The Response regulatory domain occupies 12–129; sequence HVLAVDDSIV…DVSRLCNRVI (118 aa). A 4-aspartylphosphate modification is found at D62.

The protein belongs to the ARR family. Type-A subfamily. Post-translationally, two-component system major event consists of a His-to-Asp phosphorelay between a sensor histidine kinase (HK) and a response regulator (RR). In plants, the His-to-Asp phosphorelay involves an additional intermediate named Histidine-containing phosphotransfer protein (HPt). This multistep phosphorelay consists of a His-Asp-His-Asp sequential transfer of a phosphate group between first a His and an Asp of the HK protein, followed by the transfer to a conserved His of the HPt protein and finally the transfer to an Asp in the receiver domain of the RR protein. As to expression, expressed in roots, mature leaves and flowers, and at low levels in shoots.

In terms of biological role, functions as a response regulator involved in His-to-Asp phosphorelay signal transduction system. Phosphorylation of the Asp residue in the receiver domain activates the ability of the protein to promote the transcription of target genes. Type-A response regulators seem to act as negative regulators of the cytokinin signaling. This chain is Two-component response regulator ORR3, found in Oryza sativa subsp. indica (Rice).